The chain runs to 217 residues: ATP-binding protein BexA (217 aa).

Residues 2–217 enclose the ABC transporter domain; it reads IRVNNVCKKY…AYQYYNETQK (216 aa). Residue 38–45 coordinates ATP; that stretch reads GRNGAGKS.

The protein belongs to the ABC transporter superfamily.

Its subcellular location is the cell inner membrane. In terms of biological role, putative ATP-binding protein, and an energy-coupling component of capsule polysaccharide export apparatus. The protein is ATP-binding protein BexA (bexA) of Haemophilus influenzae.